A 209-amino-acid chain; its full sequence is Putative 3-methyladenine DNA glycosylase (209 aa).

Belongs to the DNA glycosylase MPG family.

The chain is Putative 3-methyladenine DNA glycosylase from Lactiplantibacillus plantarum (strain ATCC BAA-793 / NCIMB 8826 / WCFS1) (Lactobacillus plantarum).